Consider the following 440-residue polypeptide: Ribulose bisphosphate carboxylase large chain (440 aa).

Lys-4 is modified (N6,N6,N6-trimethyllysine). The substrate site is built by Asn-113 and Thr-163. Catalysis depends on Lys-165, which acts as the Proton acceptor. Substrate is bound at residue Lys-167. Mg(2+)-binding residues include Lys-191, Asp-193, and Glu-194. N6-carboxylysine is present on Lys-191. His-284 functions as the Proton acceptor in the catalytic mechanism. 3 residues coordinate substrate: Arg-285, His-317, and Ser-369.

The protein belongs to the RuBisCO large chain family. Type I subfamily. As to quaternary structure, heterohexadecamer of 8 large chains and 8 small chains; disulfide-linked. The disulfide link is formed within the large subunit homodimers. Mg(2+) serves as cofactor. In terms of processing, the disulfide bond which can form in the large chain dimeric partners within the hexadecamer appears to be associated with oxidative stress and protein turnover.

Its subcellular location is the plastid. It is found in the chloroplast. It catalyses the reaction 2 (2R)-3-phosphoglycerate + 2 H(+) = D-ribulose 1,5-bisphosphate + CO2 + H2O. The enzyme catalyses D-ribulose 1,5-bisphosphate + O2 = 2-phosphoglycolate + (2R)-3-phosphoglycerate + 2 H(+). RuBisCO catalyzes two reactions: the carboxylation of D-ribulose 1,5-bisphosphate, the primary event in carbon dioxide fixation, as well as the oxidative fragmentation of the pentose substrate in the photorespiration process. Both reactions occur simultaneously and in competition at the same active site. This chain is Ribulose bisphosphate carboxylase large chain, found in Polystichum munitum (Western sword-fern).